Reading from the N-terminus, the 395-residue chain is Acid ceramidase (395 aa).

The N-terminal stretch at 1 to 21 (MPGRSRVALVLLAAAVSCAVA) is a signal peptide. Cys-31 and Cys-340 are disulfide-bonded. Cys-143 functions as the Nucleophile in the catalytic mechanism. Residues Asn-195, Asn-259, Asn-286, and Asn-342 are each glycosylated (N-linked (GlcNAc...) asparagine). A disulfide bond links Cys-388 and Cys-392.

This sequence belongs to the acid ceramidase family. As to quaternary structure, heterodimer; disulfide-linked. The heterodimer is composed of the disulfide-linked alpha and beta chains produced by autocatalytic cleavage of the precursor. In terms of processing, N-glycosylated. Proteolytically cleaved into two chains alpha and beta that remain associated via a disulfide bond. Cleavage gives rise to a conformation change that activates the enzyme. The same catalytic Cys residue mediates the autoproteolytic cleavage and subsequent hydrolysis of lipid substrates. The beta chain may undergo an additional C-terminal processing.

It localises to the lysosome. The protein localises to the secreted. It carries out the reaction an N-acylsphing-4-enine + H2O = sphing-4-enine + a fatty acid. It catalyses the reaction N-dodecanoylsphing-4-enine + H2O = dodecanoate + sphing-4-enine. The catalysed reaction is N-tetradecanoylsphing-4-enine + H2O = tetradecanoate + sphing-4-enine. The enzyme catalyses N-hexadecanoylsphing-4-enine + H2O = sphing-4-enine + hexadecanoate. It carries out the reaction N-octadecanoylsphing-4-enine + H2O = sphing-4-enine + octadecanoate. It catalyses the reaction N-dodecanoyl-(4R)-hydroxysphinganine + H2O = (4R)-hydroxysphinganine + dodecanoate. The catalysed reaction is N-(dodecanoyl)-sphinganine + H2O = dodecanoate + sphinganine. The enzyme catalyses N-(acetyl)-sphing-4-enine + H2O = sphing-4-enine + acetate. It carries out the reaction N-(hexanoyl)sphing-4-enine + H2O = hexanoate + sphing-4-enine. It catalyses the reaction N-octanoylsphing-4-enine + H2O = octanoate + sphing-4-enine. The catalysed reaction is N-(9Z-octadecenoyl)-sphing-4-enine + H2O = sphing-4-enine + (9Z)-octadecenoate. The enzyme catalyses N-dodecanoylethanolamine + H2O = dodecanoate + ethanolamine. Its pathway is lipid metabolism; sphingolipid metabolism. Its function is as follows. Lysosomal ceramidase that hydrolyzes sphingolipid ceramides into sphingosine and free fatty acids at acidic pH. Ceramides, sphingosine, and its phosphorylated form sphingosine-1-phosphate are bioactive lipids that mediate cellular signaling pathways regulating several biological processes including cell proliferation, apoptosis and differentiation. Has a higher catalytic efficiency towards C12-ceramides versus other ceramides. Also catalyzes the reverse reaction allowing the synthesis of ceramides from fatty acids and sphingosine. For the reverse synthetic reaction, the natural sphingosine D-erythro isomer is more efficiently utilized as a substrate compared to D-erythro-dihydrosphingosine and D-erythro-phytosphingosine, while the fatty acids with chain lengths of 12 or 14 carbons are the most efficiently used. Also has an N-acylethanolamine hydrolase activity. By regulating the levels of ceramides, sphingosine and sphingosine-1-phosphate in the epidermis, mediates the calcium-induced differentiation of epidermal keratinocytes. Also indirectly regulates tumor necrosis factor/TNF-induced apoptosis. By regulating the intracellular balance between ceramides and sphingosine, in adrenocortical cells, probably also acts as a regulator of steroidogenesis. This Pan troglodytes (Chimpanzee) protein is Acid ceramidase.